The primary structure comprises 168 residues: Outer-membrane lipoprotein YfiB (168 aa).

An N-terminal signal peptide occupies residues 1-25; it reads MLPQRLHPSRLLALALFSLVLGLAG. Residue C26 is the site of N-palmitoyl cysteine attachment. C26 carries the S-diacylglycerol cysteine lipid modification. The OmpA-like domain maps to 53–168; that stretch reads EGWEFGMSSK…RRVAIIVPAE (116 aa).

This sequence belongs to the outer membrane OOP (TC 1.B.6) superfamily. Homodimer. Interacts with YfiR. The YfiB-YfiR complex is a 2:2 heterotetramer.

The protein localises to the cell outer membrane. Both lipid anchor in the outer membrane and peptidoglycan binding are required for full activity. Once activated by certain cell stress, the dimeric YfiB transforms from a compact conformation to a stretched conformation, allowing the periplasmic domain of the membrane-anchored YfiB to penetrate the cell wall and sequester the YfiR dimer. GMP enhances the binding affinity between YfiB and YfiR. Activates the diguanylate cyclase TpbB/YfiN by sequestering YfiR at the outer membrane, which counteracts the YfiR-mediated repression of TpbB/YfiN at the inner membrane and leads to increased c-di-GMP production. May act as a sensor of envelope stress. In terms of biological role, part of the YfiB-TpbB-YfiR (or yfiBNR) system, encoding a tripartite signaling module that modulates intracellular c-di-GMP levels. The system is a key regulator of the small colony variant (SCV) phenotype, and plays an important role in biofilm formation and in vivo persistence. The c-di-GMP produced by TpbB/YfiN stimulates the production of the Pel and Psl exopolysaccharides, which promotes surface attachment, generates an SCV phenotype and confers resistance against phagocytosis. In Pseudomonas aeruginosa (strain ATCC 15692 / DSM 22644 / CIP 104116 / JCM 14847 / LMG 12228 / 1C / PRS 101 / PAO1), this protein is Outer-membrane lipoprotein YfiB.